The sequence spans 462 residues: Argininosuccinate lyase (462 aa).

Belongs to the lyase 1 family. Argininosuccinate lyase subfamily.

It is found in the cytoplasm. It catalyses the reaction 2-(N(omega)-L-arginino)succinate = fumarate + L-arginine. It functions in the pathway amino-acid biosynthesis; L-arginine biosynthesis; L-arginine from L-ornithine and carbamoyl phosphate: step 3/3. The protein is Argininosuccinate lyase of Prochlorococcus marinus (strain MIT 9211).